The following is a 399-amino-acid chain: Flavohemoprotein (399 aa).

The 138-residue stretch at 1–138 (MLDNKTIEII…IADAFIGIEK (138 aa)) folds into the Globin domain. Histidine 85 lines the heme b pocket. Active-site charge relay system residues include tyrosine 95 and glutamate 137. The reductase stretch occupies residues 149-399 (GGWKEYKPFV…GPQLSLAQSV (251 aa)). An FAD-binding FR-type domain is found at 152–255 (KEYKPFVIAK…SAPAGDFVLD (104 aa)). FAD is bound by residues tyrosine 190 and 206–209 (RQYS). 268–273 (GVGITP) contributes to the NADP(+) binding site. 388-391 (LFGP) is an FAD binding site.

Belongs to the globin family. Two-domain flavohemoproteins subfamily. The protein in the C-terminal section; belongs to the flavoprotein pyridine nucleotide cytochrome reductase family. The cofactor is heme b. FAD is required as a cofactor.

It carries out the reaction 2 nitric oxide + NADPH + 2 O2 = 2 nitrate + NADP(+) + H(+). The catalysed reaction is 2 nitric oxide + NADH + 2 O2 = 2 nitrate + NAD(+) + H(+). Is involved in NO detoxification in an aerobic process, termed nitric oxide dioxygenase (NOD) reaction that utilizes O(2) and NAD(P)H to convert NO to nitrate, which protects the bacterium from various noxious nitrogen compounds. Therefore, plays a central role in the inducible response to nitrosative stress. In Bacillus subtilis (strain 168), this protein is Flavohemoprotein (hmp).